Here is an 865-residue protein sequence, read N- to C-terminus: ABC transporter ATP-binding/permease protein Rv1747 (865 aa).

Residues 29–78 form the FHA 1 domain; sequence VVVGRDLRADVRVAHPLISRAHLLLRFDQGRWVAIDNGSLNGLYLNNRRV. A disordered region spans residues 104 to 205; that stretch reads GRHRGSAGRP…PAGARGGTEA (102 aa). Low complexity predominate over residues 135–156; the sequence is PQTGTLGSGQLQQLPPATTRIP. The residue at position 152 (threonine 152) is a Phosphothreonine. The segment covering 157 to 166 has biased composition (pro residues); the sequence is AAPPSGPQPR. Threonine 210 is subject to Phosphothreonine. Residues 230-279 form the FHA 2 domain; it reads VRIGRANDNDIVIPEVLASRHHATLVPTPGGTEIRDNRSINGTFVNGARV. Residues 319–552 enclose the ABC transporter domain; that stretch reads LDVRGVTWTI…VMGTTNWADI (234 aa). 352–359 contributes to the ATP binding site; sequence GPSGAGKS. Residues 596–810 enclose the ABC transmembrane type-2 domain; that stretch reads RQFSTIARRQ…TPARWGFAAS (215 aa). 6 consecutive transmembrane segments (helical) span residues 614 to 634, 652 to 672, 700 to 720, 740 to 760, 767 to 787, and 836 to 856; these read GYFVFLALLPFIMGALSMSVP, PGQILVLLNVGAVFMGTALTI, VCVYTVLAVVQSAIVTVIVLV, FVDVAVTCVASAMLGLALSAI, IMPLLVVAVMSQLVFSGGMIP, and SAWWFDMAMLVALSVIYVGFV.

In the central section; belongs to the ABC transporter superfamily. It in the C-terminal section; belongs to the ABC-2 integral membrane protein family. Homodimer. Interacts with PknF. Phosphorylated by PknF. Can probably be phosphorylated in vivo by other kinases when PknF is missing.

The protein resides in the cell membrane. Function is positively regulated by phosphorylation. In terms of biological role, involved in the translocation of an unknown substrate across the membrane. Transmembrane domains (TMD) form a pore in the membrane and the ATP-binding domain (NBD) is responsible for energy generation. Required for virulence. The protein is ABC transporter ATP-binding/permease protein Rv1747 of Mycobacterium tuberculosis (strain ATCC 25618 / H37Rv).